A 349-amino-acid chain; its full sequence is Glycerol-3-phosphate dehydrogenase [NAD(P)+] (349 aa).

Residues serine 12, tryptophan 13, and lysine 107 each contribute to the NADPH site. The sn-glycerol 3-phosphate site is built by lysine 107, glycine 138, and serine 140. Alanine 142 is a binding site for NADPH. Sn-glycerol 3-phosphate-binding residues include lysine 193, aspartate 246, serine 256, arginine 257, and asparagine 258. Catalysis depends on lysine 193, which acts as the Proton acceptor. Residue arginine 257 participates in NADPH binding. Residues valine 281 and glutamate 283 each contribute to the NADPH site.

It belongs to the NAD-dependent glycerol-3-phosphate dehydrogenase family.

The protein resides in the cytoplasm. The catalysed reaction is sn-glycerol 3-phosphate + NAD(+) = dihydroxyacetone phosphate + NADH + H(+). It catalyses the reaction sn-glycerol 3-phosphate + NADP(+) = dihydroxyacetone phosphate + NADPH + H(+). It participates in membrane lipid metabolism; glycerophospholipid metabolism. Catalyzes the reduction of the glycolytic intermediate dihydroxyacetone phosphate (DHAP) to sn-glycerol 3-phosphate (G3P), the key precursor for phospholipid synthesis. The polypeptide is Glycerol-3-phosphate dehydrogenase [NAD(P)+] (Pelotomaculum thermopropionicum (strain DSM 13744 / JCM 10971 / SI)).